The sequence spans 94 residues: Ig kappa-B5 chain V region 2699 (94 aa).

Positions 1–23 (AFELTQTPSSVEAAVGGTVTINC) are framework-1. A complementarity-determining-1 region spans residues 24–34 (QASTDISSNLA). Positions 35-49 (WYTPKPGSPPKLLIY) are framework-2. The interval 50-56 (SASTLAS) is complementarity-determining-2. The segment at 57 to 82 (GVSSRFKGSGSGVLITLTISDLECGV) is framework-3. A region of interest (complementarity-determining-3) is located at residue serine 83. Positions 84–93 (FGGGTKVVVE) are framework-4.

This chain is Ig kappa-B5 chain V region 2699, found in Oryctolagus cuniculus (Rabbit).